The sequence spans 954 residues: Glucosidase 2 subunit alpha (954 aa).

An N-terminal signal peptide occupies residues 1–22 (MVLLKWLVCQLVFFTAFSHAFT). Asn-114, Asn-126, Asn-142, Asn-173, and Asn-345 each carry an N-linked (GlcNAc...) asparagine glycan. The active-site Nucleophile is Asp-537. Glu-540 is an active-site residue. Asp-614 (proton donor) is an active-site residue. N-linked (GlcNAc...) asparagine glycosylation is found at Asn-783, Asn-791, Asn-867, Asn-880, Asn-907, and Asn-941.

Belongs to the glycosyl hydrolase 31 family. Heterodimer of a catalytic subunit alpha (ROT2) and a subunit beta (GTB1).

Its subcellular location is the endoplasmic reticulum. It catalyses the reaction N(4)-(alpha-D-Glc-(1-&gt;3)-alpha-D-Man-(1-&gt;2)-alpha-D-Man-(1-&gt;2)-alpha-D-Man-(1-&gt;3)-[alpha-D-Man-(1-&gt;2)-alpha-D-Man-(1-&gt;3)-[alpha-D-Man-(1-&gt;2)-alpha-D-Man-(1-&gt;6)]-alpha-D-Man-(1-&gt;6)]-beta-D-Man-(1-&gt;4)-beta-D-GlcNAc-(1-&gt;4)-beta-D-GlcNAc)-L-asparaginyl-[protein] + H2O = N(4)-(alpha-D-Man-(1-&gt;2)-alpha-D-Man-(1-&gt;2)-alpha-D-Man-(1-&gt;3)-[alpha-D-Man-(1-&gt;2)-alpha-D-Man-(1-&gt;3)-[alpha-D-Man-(1-&gt;2)-alpha-D-Man-(1-&gt;6)]-alpha-D-Man-(1-&gt;6)]-beta-D-Man-(1-&gt;4)-beta-D-GlcNAc-(1-&gt;4)-beta-D-GlcNAc)-L-asparaginyl-[protein] (N-glucan mannose isomer 9A1,2,3B1,2,3) + beta-D-glucose. It carries out the reaction N(4)-(alpha-D-Glc-(1-&gt;3)-alpha-D-Glc-(1-&gt;3)-alpha-D-Man-(1-&gt;2)-alpha-D-Man-(1-&gt;2)-alpha-D-Man-(1-&gt;3)-[alpha-D-Man-(1-&gt;2)-alpha-D-Man-(1-&gt;3)-[alpha-D-Man-(1-&gt;2)-alpha-D-Man-(1-&gt;6)]-alpha-D-Man-(1-&gt;6)]-beta-D-Man-(1-&gt;4)-beta-D-GlcNAc-(1-&gt;4)-beta-D-GlcNAc)-L-asparaginyl-[protein] + H2O = N(4)-(alpha-D-Glc-(1-&gt;3)-alpha-D-Man-(1-&gt;2)-alpha-D-Man-(1-&gt;2)-alpha-D-Man-(1-&gt;3)-[alpha-D-Man-(1-&gt;2)-alpha-D-Man-(1-&gt;3)-[alpha-D-Man-(1-&gt;2)-alpha-D-Man-(1-&gt;6)]-alpha-D-Man-(1-&gt;6)]-beta-D-Man-(1-&gt;4)-beta-D-GlcNAc-(1-&gt;4)-beta-D-GlcNAc)-L-asparaginyl-[protein] + beta-D-glucose. Its pathway is glycan metabolism; N-glycan metabolism. Inhibited by glucose, maltose and nigerose, and by the antibiotic deoxynojirimycin. Its function is as follows. Catalytic subunit of glucosidase 2, which cleaves sequentially the 2 innermost alpha-1,3-linked glucose residues from the Glc(2)Man(9)GlcNAc(2) oligosaccharide precursor of immature glycoproteins. This is Glucosidase 2 subunit alpha (ROT2) from Saccharomyces cerevisiae (strain ATCC 204508 / S288c) (Baker's yeast).